A 1453-amino-acid chain; its full sequence is Scavenger receptor cysteine-rich type 1 protein M160 (1453 aa).

Positions 1 to 40 are cleaved as a signal peptide; that stretch reads MMLPQNSWHIDFGRCCCHQNLFSAVVTCILLLNSCFLISS. At 41–1359 the chain is on the extracellular side; sequence FNGTDLELRL…LKSLNASSGH (1319 aa). Residues Asn-42, Asn-78, Asn-120, and Asn-161 are each glycosylated (N-linked (GlcNAc...) asparagine). 9 consecutive SRCR domains span residues 48 to 148, 155 to 255, 262 to 362, 369 to 469, 476 to 576, 583 to 683, 690 to 790, 795 to 895, and 900 to 1000; these read LRLV…VNCY, LRLV…LTCY, LRLV…VICS, LRLA…VICS, LRLV…VTCS, LRLV…LICS, PRLV…VVCS, and VRLV…VICT. Disulfide bonds link Cys-73-Cys-137, Cys-86-Cys-147, and Cys-117-Cys-127. Disulfide bonds link Cys-180–Cys-244, Cys-193–Cys-254, Cys-224–Cys-234, Cys-287–Cys-351, Cys-300–Cys-361, and Cys-331–Cys-341. 5 N-linked (GlcNAc...) asparagine glycosylation sites follow: Asn-334, Asn-377, Asn-441, Asn-548, and Asn-637. Cystine bridges form between Cys-394-Cys-458, Cys-407-Cys-468, Cys-438-Cys-448, Cys-501-Cys-565, Cys-514-Cys-575, Cys-545-Cys-555, Cys-608-Cys-672, Cys-621-Cys-682, Cys-652-Cys-662, Cys-715-Cys-779, Cys-728-Cys-789, Cys-759-Cys-769, Cys-820-Cys-884, Cys-833-Cys-894, Cys-864-Cys-874, Cys-925-Cys-989, Cys-938-Cys-999, and Cys-969-Cys-979. 4 N-linked (GlcNAc...) asparagine glycosylation sites follow: Asn-972, Asn-1013, Asn-1084, and Asn-1104. 3 SRCR domains span residues 1036-1136, 1141-1243, and 1246-1346; these read LRLV…VICS, LRLY…ITCE, and IRVR…VRCS. Cystine bridges form between Cys-1061–Cys-1125, Cys-1074–Cys-1135, and Cys-1105–Cys-1115. N-linked (GlcNAc...) asparagine glycans are attached at residues Asn-1161 and Asn-1171. 5 disulfides stabilise this stretch: Cys-1181-Cys-1242, Cys-1212-Cys-1222, Cys-1271-Cys-1335, Cys-1284-Cys-1345, and Cys-1315-Cys-1325. Residues Asn-1318 and Asn-1354 are each glycosylated (N-linked (GlcNAc...) asparagine). A helical membrane pass occupies residues 1360–1380; the sequence is LALILSSIFGLLLLVLFILFL. At 1381 to 1453 the chain is on the cytoplasmic side; sequence TWCRVQKQKH…GVLPASEATK (73 aa). A compositionally biased stretch (basic and acidic residues) spans 1418–1435; sequence EDPHGTRTSDDTPNHGCE. The interval 1418 to 1453 is disordered; the sequence is EDPHGTRTSDDTPNHGCEDASDTSLLGVLPASEATK.

As to expression, isoform 1 is highly expressed in the spleen, lymph nodes, thymus, and fetal liver and weakly expressed in bone marrow and no expression was found in peripheral blood leukocytes. Isoform 1 expression is restricted to the monocyte and macrophage cell lines. Isoform 2 is only expressed in spleen.

It localises to the cell membrane. Its subcellular location is the secreted. This Homo sapiens (Human) protein is Scavenger receptor cysteine-rich type 1 protein M160 (CD163L1).